The primary structure comprises 385 residues: Proliferation-associated protein A (385 aa).

The protein belongs to the peptidase M24 family.

The protein is Proliferation-associated protein A (prlA) of Dictyostelium discoideum (Social amoeba).